The following is a 439-amino-acid chain: Tol-Pal system protein TolB (439 aa).

The N-terminal stretch at 1–22 (MTKFPRWLAILVGLLFPLSALT) is a signal peptide.

This sequence belongs to the TolB family. In terms of assembly, the Tol-Pal system is composed of five core proteins: the inner membrane proteins TolA, TolQ and TolR, the periplasmic protein TolB and the outer membrane protein Pal. They form a network linking the inner and outer membranes and the peptidoglycan layer.

It is found in the periplasm. Part of the Tol-Pal system, which plays a role in outer membrane invagination during cell division and is important for maintaining outer membrane integrity. The chain is Tol-Pal system protein TolB from Xylella fastidiosa (strain M12).